Reading from the N-terminus, the 194-residue chain is dCTP deaminase (194 aa).

Residues 110–115, aspartate 128, 136–138, tyrosine 171, lysine 178, and glutamine 182 each bind dCTP; these read RSSLAR and VLE. The active-site Proton donor/acceptor is glutamate 138. The segment at 171 to 194 is disordered; the sequence is YNKRKNAKYKDQQEAVASRISQDS.

The protein belongs to the dCTP deaminase family. As to quaternary structure, homotrimer.

The enzyme catalyses dCTP + H2O + H(+) = dUTP + NH4(+). The protein operates within pyrimidine metabolism; dUMP biosynthesis; dUMP from dCTP (dUTP route): step 1/2. Catalyzes the deamination of dCTP to dUTP. The protein is dCTP deaminase of Shewanella amazonensis (strain ATCC BAA-1098 / SB2B).